The sequence spans 823 residues: Ciliated left-right organizer ZP-N domains-containing protein (823 aa).

Residues 1-22 (MWGSPALAWAVWLACVQPTVFP) form the signal peptide. Disordered regions lie at residues 206-242 (MGLY…LLPL), 269-422 (LVHI…DLLH), 434-520 (GPFL…SPSP), and 632-656 (LPRE…EGPG). Positions 216-230 (TVTVQSPRQGLLQRW) are enriched in pro residues. Low complexity predominate over residues 389 to 402 (GPETPPAGVPPAAS).

The protein localises to the secreted. In terms of biological role, plays a role in left-right patterning process. This chain is Ciliated left-right organizer ZP-N domains-containing protein, found in Homo sapiens (Human).